We begin with the raw amino-acid sequence, 203 residues long: RNA annealing protein YRA2 (203 aa).

Residue M1 is modified to N-acetylmethionine. Disordered regions lie at residues 1-60 (MDKA…REEP) and 137-203 (QPQR…YMKG). Residues 11–20 (NSHTDSSSNH) are compositionally biased toward polar residues. Positions 47-60 (SRSKDRLYREREEP) are enriched in basic and acidic residues. Residues 64-138 (KRIRISKIPL…AKIEVEIYQP (75 aa)) form the RRM domain. Composition is skewed to basic residues over residues 139-153 (QRKHSRMNAHNRRKQ) and 161-180 (GRPGSHYRQKPNRVSKKNKG).

Belongs to the YRA1 family. In terms of assembly, associates with mRNPs. Interacts with YRA1.

Its subcellular location is the nucleus. In terms of biological role, involved in export of poly(A) mRNAs from the nucleus. Recruited to the coding sequences as well as poly-A sites of active genes. This chain is RNA annealing protein YRA2 (YRA2), found in Saccharomyces cerevisiae (strain JAY291) (Baker's yeast).